We begin with the raw amino-acid sequence, 292 residues long: MPSASKNFRLQSKYVFLTYPKCSSQRDDLFQFLWEKLTPFLIFFLGVASELHQDGTTHYHALIQLDKKPCIRDPSFFDFEGNHPNIQPARNSKQVLDYISKDGDIKTRGDFRDHKVSPRKSDARWRTIIQTATSKEEYLDMIKEEFPHEWATKLQWLEYSANKLFPPQPEQYVSPFTESDLRCHEDLHNWRETHLYHVSIDAYTFIHPVSYDQAQSDLEWMADLTRMREGLGSDTPASTSADQLVPERPPGLEVSGDTTTGTGPSTSPTTMNTPPIISSTTSPSSSSHCGSN.

In terms of domain architecture, CRESS-DNA virus Rep endonuclease spans 9 to 111 (RLQSKYVFLT…DGDIKTRGDF (103 aa)). The short motif at 16–19 (FLTY) is the RCR-1 element. Residues glutamate 50, histidine 58, and histidine 60 each contribute to the a divalent metal cation site. The RCR-2 signature appears at 58–60 (HYH). The active-site For DNA cleavage activity is tyrosine 98. The RCR-3 motif lies at 98 to 101 (YISK). Aspartate 102 contacts a divalent metal cation. The oligomerization stretch occupies residues 160–172 (SANKLFPPQPEQY). The interval 181-185 (LRCHE) is binding to RBR1. The segment at 230–292 (GLGSDTPAST…PSSSSHCGSN (63 aa)) is disordered. Positions 255–292 (SGDTTTGTGPSTSPTTMNTPPIISSTTSPSSSSHCGSN) are enriched in low complexity.

This sequence belongs to the geminiviridae Rep protein family. As to quaternary structure, homooligomer. Interacts with host retinoblastoma-related protein 1 (RBR1), and may thereby deregulate the host cell cycle. Part of the C- and V-complexes which are RepA-Rep-DNA complexes involved in the c-sense and v-sense transcription. Mg(2+) serves as cofactor. It depends on Mn(2+) as a cofactor.

It is found in the host nucleus. The protein localises to the host cytoplasm. Functionally, implicated in enhancement of V-sense gene expression. Acts a an inhibitor of C-sense gene transcription. This Bean yellow dwarf virus (BeYDV) protein is Replication-associated protein A.